The sequence spans 210 residues: Protein GET1 (210 aa).

Residues 1–4 (MPSL) are Lumenal-facing. A helical transmembrane segment spans residues 5–24 (LIIVLIIHVVTYLINTIGAN). Over 25 to 110 (TIDSLLWLLY…SFDLAVKSIR (86 aa)) the chain is Cytoplasmic. The stretch at 39–95 (NQTSQTANEQRRLKREVMQLKREMNATSSQDEFAKWAKLRRRHDKTMEEYEAKNKAL) forms a coiled coil. The chain crosses the membrane as a helical span at residues 111–131 (FFSTTGLKLFLQFWCSKTPIF). Topologically, residues 132–155 (ELPRGWIPWQVEWVLSFPRAPLGT) are lumenal. Residues 156-172 (VSIQIWGGVCATVVSLA) form a helical membrane-spanning segment. At 173 to 210 (GDAIGVVNVYLTSKAPKQKEPATSGENSARPMAIKKEL) the chain is on the cytoplasmic side. Positions 189 to 210 (KQKEPATSGENSARPMAIKKEL) are disordered.

This sequence belongs to the WRB/GET1 family. In terms of assembly, interacts with GET3.

Its subcellular location is the endoplasmic reticulum membrane. Required for the post-translational delivery of tail-anchored (TA) proteins to the endoplasmic reticulum. Acts as a membrane receptor for soluble GET3, which recognizes and selectively binds the transmembrane domain of TA proteins in the cytosol. This Coccidioides immitis (strain RS) (Valley fever fungus) protein is Protein GET1.